The following is a 144-amino-acid chain: Large ribosomal subunit protein uL15 (144 aa).

Residues 1-56 (MELNNLKPAEGAKHAKRRVGRGIGSGLGKTAGRGHKGQKSRSGGFHKVGFEGGQMP) are disordered. Residues 21–31 (RGIGSGLGKTA) are compositionally biased toward gly residues.

Belongs to the universal ribosomal protein uL15 family. In terms of assembly, part of the 50S ribosomal subunit.

Its function is as follows. Binds to the 23S rRNA. This chain is Large ribosomal subunit protein uL15, found in Burkholderia mallei (strain NCTC 10247).